The following is a 163-amino-acid chain: Acetolactate synthase isozyme 3 small subunit (163 aa).

An ACT domain is found at 4 to 78 (ILSVLLENES…DVLRVSELGQ (75 aa)).

This sequence belongs to the acetolactate synthase small subunit family. Dimer of large and small chains.

It catalyses the reaction 2 pyruvate + H(+) = (2S)-2-acetolactate + CO2. It participates in amino-acid biosynthesis; L-isoleucine biosynthesis; L-isoleucine from 2-oxobutanoate: step 1/4. Its pathway is amino-acid biosynthesis; L-valine biosynthesis; L-valine from pyruvate: step 1/4. With respect to regulation, sensitive to valine inhibition. The polypeptide is Acetolactate synthase isozyme 3 small subunit (ilvH) (Escherichia coli (strain K12)).